We begin with the raw amino-acid sequence, 440 residues long: Argininosuccinate lyase (440 aa).

It belongs to the lyase 1 family. Argininosuccinate lyase subfamily.

The protein resides in the cytoplasm. It catalyses the reaction 2-(N(omega)-L-arginino)succinate = fumarate + L-arginine. The protein operates within amino-acid biosynthesis; L-arginine biosynthesis; L-arginine from L-ornithine and carbamoyl phosphate: step 3/3. This is Argininosuccinate lyase from Clostridium botulinum (strain Langeland / NCTC 10281 / Type F).